Reading from the N-terminus, the 83-residue chain is Translational regulator CsrA (83 aa).

This sequence belongs to the CsrA/RsmA family. Homodimer; the beta-strands of each monomer intercalate to form a hydrophobic core, while the alpha-helices form wings that extend away from the core.

The protein resides in the cytoplasm. In terms of biological role, a translational regulator that binds mRNA to regulate translation initiation and/or mRNA stability. Usually binds in the 5'-UTR at or near the Shine-Dalgarno sequence preventing ribosome-binding, thus repressing translation. Its main target seems to be the major flagellin gene, while its function is anatagonized by FliW. The sequence is that of Translational regulator CsrA from Thermotoga petrophila (strain ATCC BAA-488 / DSM 13995 / JCM 10881 / RKU-1).